We begin with the raw amino-acid sequence, 337 residues long: Fructose-1,6-bisphosphatase class 1 (337 aa).

Residues E89, D112, L114, and D115 each coordinate Mg(2+). Substrate-binding positions include 115–118, N208, Y241, and K271; that span reads DGSS. E277 contacts Mg(2+).

The protein belongs to the FBPase class 1 family. In terms of assembly, homotetramer. Requires Mg(2+) as cofactor.

It localises to the cytoplasm. It carries out the reaction beta-D-fructose 1,6-bisphosphate + H2O = beta-D-fructose 6-phosphate + phosphate. Its pathway is carbohydrate biosynthesis; gluconeogenesis. This Yersinia pestis bv. Antiqua (strain Antiqua) protein is Fructose-1,6-bisphosphatase class 1.